The following is a 320-amino-acid chain: o-succinylbenzoate synthase (320 aa).

Lys133 acts as the Proton donor in catalysis. Residues Asp161, Glu190, and Asp213 each coordinate Mg(2+). The active-site Proton acceptor is the Lys235.

It belongs to the mandelate racemase/muconate lactonizing enzyme family. MenC type 1 subfamily. The cofactor is a divalent metal cation.

It catalyses the reaction (1R,6R)-6-hydroxy-2-succinyl-cyclohexa-2,4-diene-1-carboxylate = 2-succinylbenzoate + H2O. It participates in quinol/quinone metabolism; 1,4-dihydroxy-2-naphthoate biosynthesis; 1,4-dihydroxy-2-naphthoate from chorismate: step 4/7. Its pathway is quinol/quinone metabolism; menaquinone biosynthesis. In terms of biological role, converts 2-succinyl-6-hydroxy-2,4-cyclohexadiene-1-carboxylate (SHCHC) to 2-succinylbenzoate (OSB). This is o-succinylbenzoate synthase from Salmonella dublin (strain CT_02021853).